The sequence spans 120 residues: uncharacterized protein (120 aa).

An N-terminal signal peptide occupies residues Met1 to Ala22. Topologically, residues Phe23–Ser59 are extracellular. A helical transmembrane segment spans residues Leu60–Leu80. Topologically, residues Ser81–Asn120 are cytoplasmic.

It is found in the membrane. This is an uncharacterized protein from Schizosaccharomyces pombe (strain 972 / ATCC 24843) (Fission yeast).